We begin with the raw amino-acid sequence, 239 residues long: Proteasome activator complex subunit 2 (239 aa).

Alanine 2 bears the N-acetylalanine mark. Serine 10 carries the post-translational modification Phosphoserine.

The protein belongs to the PA28 family. Heterodimer of PSME1 and PSME2, which forms a hexameric ring.

In terms of biological role, implicated in immunoproteasome assembly and required for efficient antigen processing. The PA28 activator complex enhances the generation of class I binding peptides by altering the cleavage pattern of the proteasome. This is Proteasome activator complex subunit 2 (PSME2) from Homo sapiens (Human).